A 385-amino-acid chain; its full sequence is Putative transport protein BpOF4_00890 (385 aa).

8 helical membrane passes run 42 to 62 (TIWI…ILPV), 63 to 83 (SLPL…VNAL), 93 to 113 (VAVM…GYYI), 191 to 211 (SIPG…LFML), 255 to 275 (IIIF…VALL), 276 to 296 (MAFI…VILA), 304 to 324 (IVGD…LLII), and 350 to 370 (LGLM…VIAF).

Belongs to the autoinducer-2 exporter (AI-2E) (TC 2.A.86) family.

Its subcellular location is the cell membrane. The polypeptide is Putative transport protein BpOF4_00890 (Alkalihalophilus pseudofirmus (strain ATCC BAA-2126 / JCM 17055 / OF4) (Bacillus pseudofirmus)).